The following is a 113-amino-acid chain: MGGLEPCSRLLLLPLLLAVGGLRPVQAQAQSDCSCSTVSPGVLAGIVMGDLVLTVLIALAVYFLGRLVHRGRGAAEAATRKQRITETESPYQELQGQRSDVYSDLNMQRPYYK.

Residues M1–A27 form the signal peptide. Residues Q28 to P40 lie on the Extracellular side of the membrane. The chain crosses the membrane as a helical span at residues G41–V61. D50 is a Ca(2+) binding site. Over Y62 to K113 the chain is Cytoplasmic. Positions A75–K113 are disordered. Residues R80 to Q108 form the ITAM domain. Positions T87–D100 are enriched in polar residues. Residues Y91 and Y102 each carry the phosphotyrosine modification.

The protein belongs to the TYROBP family. Homodimer; disulfide-linked. Homotrimer; disulfide-linked. Homotetramer; disulfide-linked. Homotrimers and homotetramers form when low levels of partner receptors are available and is competitive with assembly with interacting receptors. They may represent alternative oligomerization states or may be intermediates in the receptor assembly process. Binding of a metal cation aids in homooligomerization through coordination of the metal ion by the subunits of the oligomer. Interacts with TREM1. Interacts with TREM2. Interacts with CLECSF5. Interacts with CD300LB and CD300C2. Interacts with CD300E. Interacts (via ITAM domain) with SYK (via SH2 domains); activates SYK mediating neutrophils and macrophages integrin-mediated activation. Interacts with KLRC2. Interacts with CD300H. Interacts with KLRD1. Interacts with SIGLEC1. Following ligand binding by associated receptors, tyrosine phosphorylated in the ITAM domain which leads to activation of additional tyrosine kinases and subsequent cell activation.

It is found in the cell membrane. In terms of biological role, adapter protein which non-covalently associates with activating receptors found on the surface of a variety of immune cells to mediate signaling and cell activation following ligand binding by the receptors. TYROBP is tyrosine-phosphorylated in the ITAM domain following ligand binding by the associated receptors which leads to activation of additional tyrosine kinases and subsequent cell activation. Also has an inhibitory role in some cells. Non-covalently associates with activating receptors of the CD300 family to mediate cell activation. Also mediates cell activation through association with activating receptors of the CD200R family. Required for neutrophil activation mediated by integrin. Required for the activation of myeloid cells mediated by the CLEC5A/MDL1 receptor. Associates with natural killer (NK) cell receptors such as the KLRD1/KLRC2 heterodimer to mediate NK cell activation. Associates with TREM1 to mediate activation of neutrophils and monocytes. Associates with TREM2 on monocyte-derived dendritic cells to mediate up-regulation of chemokine receptor CCR7 and dendritic cell maturation and survival. Association with TREM2 mediates cytokine-induced formation of multinucleated giant cells which are formed by the fusion of macrophages. Stabilizes the TREM2 C-terminal fragment (TREM2-CTF) produced by TREM2 ectodomain shedding which suppresses the release of pro-inflammatory cytokines. In microglia, required with TREM2 for phagocytosis of apoptotic neurons. Required with ITGAM/CD11B in microglia to control production of microglial superoxide ions which promote the neuronal apoptosis that occurs during brain development. Promotes pro-inflammatory responses in microglia following nerve injury which accelerates degeneration of injured neurons. Positively regulates the expression of the IRAK3/IRAK-M kinase and IL10 production by liver dendritic cells and inhibits their T cell allosimulatory ability. Negatively regulates B cell proliferation. Required for CSF1-mediated osteoclast cytoskeletal organization. Positively regulates multinucleation during osteoclast development. This Pan troglodytes (Chimpanzee) protein is TYRO protein tyrosine kinase-binding protein.